The primary structure comprises 257 residues: Type III pantothenate kinase (257 aa).

An ATP-binding site is contributed by 6–13 (DCGNTNTV). 107-110 (GPDR) is a substrate binding site. Aspartate 109 functions as the Proton acceptor in the catalytic mechanism. Residue aspartate 129 coordinates K(+). Residue threonine 132 participates in ATP binding. Threonine 184 is a binding site for substrate.

Belongs to the type III pantothenate kinase family. Homodimer. Requires NH4(+) as cofactor. The cofactor is K(+).

The protein resides in the cytoplasm. It carries out the reaction (R)-pantothenate + ATP = (R)-4'-phosphopantothenate + ADP + H(+). The protein operates within cofactor biosynthesis; coenzyme A biosynthesis; CoA from (R)-pantothenate: step 1/5. Functionally, catalyzes the phosphorylation of pantothenate (Pan), the first step in CoA biosynthesis. The chain is Type III pantothenate kinase from Cereibacter sphaeroides (strain ATCC 17025 / ATH 2.4.3) (Rhodobacter sphaeroides).